Consider the following 200-residue polypeptide: Holliday junction branch migration complex subunit RuvA (200 aa).

The domain I stretch occupies residues 1 to 65 (MYEYIKGTLT…ETEHVLYGFS (65 aa)). The segment at 66-144 (SRAERECFRL…TLMPLYLEEP (79 aa)) is domain II. A flexible linker region spans residues 145 to 149 (VVPSS). The segment at 150–200 (TANSSFKEGIGALMNLGFSRLAADRMMTEAVKELSEEASVAELLPIALRKS) is domain III.

The protein belongs to the RuvA family. As to quaternary structure, homotetramer. Forms an RuvA(8)-RuvB(12)-Holliday junction (HJ) complex. HJ DNA is sandwiched between 2 RuvA tetramers; dsDNA enters through RuvA and exits via RuvB. An RuvB hexamer assembles on each DNA strand where it exits the tetramer. Each RuvB hexamer is contacted by two RuvA subunits (via domain III) on 2 adjacent RuvB subunits; this complex drives branch migration. In the full resolvosome a probable DNA-RuvA(4)-RuvB(12)-RuvC(2) complex forms which resolves the HJ.

The protein resides in the cytoplasm. In terms of biological role, the RuvA-RuvB-RuvC complex processes Holliday junction (HJ) DNA during genetic recombination and DNA repair, while the RuvA-RuvB complex plays an important role in the rescue of blocked DNA replication forks via replication fork reversal (RFR). RuvA specifically binds to HJ cruciform DNA, conferring on it an open structure. The RuvB hexamer acts as an ATP-dependent pump, pulling dsDNA into and through the RuvAB complex. HJ branch migration allows RuvC to scan DNA until it finds its consensus sequence, where it cleaves and resolves the cruciform DNA. The sequence is that of Holliday junction branch migration complex subunit RuvA from Chlamydia trachomatis serovar D (strain ATCC VR-885 / DSM 19411 / UW-3/Cx).